The chain runs to 365 residues: Uroporphyrinogen decarboxylase (365 aa).

Residues 1 to 17 (MSANDSPSGQQTTTSAS) are compositionally biased toward polar residues. The disordered stretch occupies residues 1–20 (MSANDSPSGQQTTTSASLDA). Substrate is bound by residues 48–52 (RQAGR), D97, Y172, S227, and H341.

Belongs to the uroporphyrinogen decarboxylase family. In terms of assembly, homodimer.

Its subcellular location is the cytoplasm. The catalysed reaction is uroporphyrinogen III + 4 H(+) = coproporphyrinogen III + 4 CO2. Its pathway is porphyrin-containing compound metabolism; protoporphyrin-IX biosynthesis; coproporphyrinogen-III from 5-aminolevulinate: step 4/4. Catalyzes the decarboxylation of four acetate groups of uroporphyrinogen-III to yield coproporphyrinogen-III. This chain is Uroporphyrinogen decarboxylase, found in Streptomyces griseus subsp. griseus (strain JCM 4626 / CBS 651.72 / NBRC 13350 / KCC S-0626 / ISP 5235).